The primary structure comprises 282 residues: Phosphatidylserine decarboxylase proenzyme (282 aa).

Active-site charge relay system; for autoendoproteolytic cleavage activity residues include aspartate 85, histidine 142, and serine 244. Catalysis depends on serine 244, which acts as the Schiff-base intermediate with substrate; via pyruvic acid; for decarboxylase activity. Serine 244 is subject to Pyruvic acid (Ser); by autocatalysis.

It belongs to the phosphatidylserine decarboxylase family. PSD-B subfamily. Prokaryotic type I sub-subfamily. In terms of assembly, heterodimer of a large membrane-associated beta subunit and a small pyruvoyl-containing alpha subunit. Requires pyruvate as cofactor. Post-translationally, is synthesized initially as an inactive proenzyme. Formation of the active enzyme involves a self-maturation process in which the active site pyruvoyl group is generated from an internal serine residue via an autocatalytic post-translational modification. Two non-identical subunits are generated from the proenzyme in this reaction, and the pyruvate is formed at the N-terminus of the alpha chain, which is derived from the carboxyl end of the proenzyme. The autoendoproteolytic cleavage occurs by a canonical serine protease mechanism, in which the side chain hydroxyl group of the serine supplies its oxygen atom to form the C-terminus of the beta chain, while the remainder of the serine residue undergoes an oxidative deamination to produce ammonia and the pyruvoyl prosthetic group on the alpha chain. During this reaction, the Ser that is part of the protease active site of the proenzyme becomes the pyruvoyl prosthetic group, which constitutes an essential element of the active site of the mature decarboxylase.

The protein localises to the cell membrane. It catalyses the reaction a 1,2-diacyl-sn-glycero-3-phospho-L-serine + H(+) = a 1,2-diacyl-sn-glycero-3-phosphoethanolamine + CO2. Its pathway is phospholipid metabolism; phosphatidylethanolamine biosynthesis; phosphatidylethanolamine from CDP-diacylglycerol: step 2/2. Functionally, catalyzes the formation of phosphatidylethanolamine (PtdEtn) from phosphatidylserine (PtdSer). This chain is Phosphatidylserine decarboxylase proenzyme, found in Coxiella burnetii (strain Dugway 5J108-111).